The following is a 372-amino-acid chain: tRNA-specific 2-thiouridylase MnmA (372 aa).

ATP contacts are provided by residues 16–23 and methionine 42; that span reads GMSGGVDS. The tract at residues 102-104 is interaction with target base in tRNA; sequence NPD. Residue cysteine 107 is the Nucleophile of the active site. A disulfide bond links cysteine 107 and cysteine 205. Glycine 132 provides a ligand contact to ATP. Residues 155–157 form an interaction with tRNA region; the sequence is KDQ. The Cysteine persulfide intermediate role is filled by cysteine 205. An interaction with tRNA region spans residues 317 to 318; sequence RY.

Belongs to the MnmA/TRMU family.

Its subcellular location is the cytoplasm. The enzyme catalyses S-sulfanyl-L-cysteinyl-[protein] + uridine(34) in tRNA + AH2 + ATP = 2-thiouridine(34) in tRNA + L-cysteinyl-[protein] + A + AMP + diphosphate + H(+). Catalyzes the 2-thiolation of uridine at the wobble position (U34) of tRNA, leading to the formation of s(2)U34. In Shewanella sp. (strain MR-4), this protein is tRNA-specific 2-thiouridylase MnmA.